The primary structure comprises 276 residues: Large ribosomal subunit protein uL2c (276 aa).

The segment at 221–276 (RGSVMNPVDHPHGGGEGRAPIGRSRPVTPWGKPALGQKTRKPKKQSNKLILRKRKK) is disordered. Over residues 258 to 276 (KTRKPKKQSNKLILRKRKK) the composition is skewed to basic residues.

Belongs to the universal ribosomal protein uL2 family. Part of the 50S ribosomal subunit.

It is found in the plastid. Its subcellular location is the chloroplast. The chain is Large ribosomal subunit protein uL2c (rpl2) from Stigeoclonium helveticum (Green alga).